The primary structure comprises 106 residues: uncharacterized protein (106 aa).

A compositionally biased stretch (polar residues) spans A24–K35. Disordered stretches follow at residues A24–E49 and L65–E87. Low complexity-rich tracts occupy residues S36–S46 and S74–S85.

This is an uncharacterized protein from Arabidopsis thaliana (Mouse-ear cress).